The chain runs to 232 residues: MKIGIIGAMEEEVTLLRDKIDNRQTITLGGCEIYTGQLNGTEVALLKSGIGKVAAALGATLLLEHCKPDVIINTGSAGGLASTLKVGDIVVSDEARYHDADVTAFGYEYGQLPGCPAGFKADDKLIAAAESCIRELNLNAVRGLIVSGDAFINGSVGLAKIRHNFPDAVAVEMEATAIAHVCYNFNVPFVVVRAISDVADQQSHLSFDEFLAVAAKQSTLMVETLVQKLAHG.

The active-site Proton acceptor is the Glu-12. Substrate-binding positions include Gly-78, Ile-152, and 173-174 (ME). Catalysis depends on Asp-197, which acts as the Proton donor.

Belongs to the PNP/UDP phosphorylase family. MtnN subfamily. Homodimer.

It carries out the reaction S-adenosyl-L-homocysteine + H2O = S-(5-deoxy-D-ribos-5-yl)-L-homocysteine + adenine. It catalyses the reaction S-methyl-5'-thioadenosine + H2O = 5-(methylsulfanyl)-D-ribose + adenine. The enzyme catalyses 5'-deoxyadenosine + H2O = 5-deoxy-D-ribose + adenine. It functions in the pathway amino-acid biosynthesis; L-methionine biosynthesis via salvage pathway; S-methyl-5-thio-alpha-D-ribose 1-phosphate from S-methyl-5'-thioadenosine (hydrolase route): step 1/2. Catalyzes the irreversible cleavage of the glycosidic bond in both 5'-methylthioadenosine (MTA) and S-adenosylhomocysteine (SAH/AdoHcy) to adenine and the corresponding thioribose, 5'-methylthioribose and S-ribosylhomocysteine, respectively. Also cleaves 5'-deoxyadenosine, a toxic by-product of radical S-adenosylmethionine (SAM) enzymes, into 5-deoxyribose and adenine. Thus, is required for in vivo function of the radical SAM enzymes biotin synthase and lipoic acid synthase, that are inhibited by 5'-deoxyadenosine accumulation. The protein is 5'-methylthioadenosine/S-adenosylhomocysteine nucleosidase of Salmonella agona (strain SL483).